The primary structure comprises 315 residues: tRNA pseudouridine synthase B (315 aa).

The active-site Nucleophile is the D54.

The protein belongs to the pseudouridine synthase TruB family. Type 1 subfamily.

It catalyses the reaction uridine(55) in tRNA = pseudouridine(55) in tRNA. Its function is as follows. Responsible for synthesis of pseudouridine from uracil-55 in the psi GC loop of transfer RNAs. The protein is tRNA pseudouridine synthase B of Cupriavidus pinatubonensis (strain JMP 134 / LMG 1197) (Cupriavidus necator (strain JMP 134)).